The chain runs to 149 residues: Calmodulin (149 aa).

An N-acetylalanine modification is found at alanine 2. EF-hand domains are found at residues 8–43, 44–79, 81–116, and 117–149; these read EQIA…LGQN, PTEA…KMKD, DSEE…LGEK, and LTDE…MTSK. 14 residues coordinate Ca(2+): aspartate 21, aspartate 23, aspartate 25, threonine 27, glutamate 32, aspartate 57, aspartate 59, aspartate 61, threonine 63, glutamate 68, aspartate 94, aspartate 96, asparagine 98, and glutamate 105. An N6,N6,N6-trimethyllysine modification is found at lysine 116. The Ca(2+) site is built by aspartate 130, aspartate 132, aspartate 134, glutamine 136, and glutamate 141.

Belongs to the calmodulin family.

Functionally, calmodulin mediates the control of a large number of enzymes, ion channels and other proteins by Ca(2+). Among the enzymes to be stimulated by the calmodulin-Ca(2+) complex are a number of protein kinases and phosphatases. This chain is Calmodulin, found in Pyuridae sp. (Sea squirt).